The chain runs to 1095 residues: DNA-directed RNA polymerase subunit beta (1095 aa).

The disordered stretch occupies residues 1069–1095; that stretch reads DLMQDVNPRRSTPSRPTYESLGKEYEE.

Belongs to the RNA polymerase beta chain family. In terms of assembly, in cyanobacteria the RNAP catalytic core is composed of 2 alpha, 1 beta, 1 beta', 1 gamma and 1 omega subunit. When a sigma factor is associated with the core the holoenzyme is formed, which can initiate transcription.

It carries out the reaction RNA(n) + a ribonucleoside 5'-triphosphate = RNA(n+1) + diphosphate. Functionally, DNA-dependent RNA polymerase catalyzes the transcription of DNA into RNA using the four ribonucleoside triphosphates as substrates. This Prochlorococcus marinus (strain NATL1A) protein is DNA-directed RNA polymerase subunit beta.